Consider the following 329-residue polypeptide: tRNA pseudouridine synthase B (329 aa).

Residue H43 coordinates substrate. D48 (nucleophile) is an active-site residue. Y76, Y179, and L200 together coordinate substrate.

Belongs to the pseudouridine synthase TruB family. Type 1 subfamily.

It carries out the reaction uridine(55) in tRNA = pseudouridine(55) in tRNA. In terms of biological role, responsible for synthesis of pseudouridine from uracil-55 in the psi GC loop of transfer RNAs. The chain is tRNA pseudouridine synthase B from Yersinia enterocolitica serotype O:8 / biotype 1B (strain NCTC 13174 / 8081).